A 243-amino-acid polypeptide reads, in one-letter code: NH(3)-dependent NAD(+) synthetase (243 aa).

31–38 (GLSGGVDS) contacts ATP. Residue aspartate 37 coordinates Mg(2+). Arginine 116 lines the deamido-NAD(+) pocket. Threonine 136 provides a ligand contact to ATP. Mg(2+) is bound at residue glutamate 141. Positions 149 and 156 each coordinate deamido-NAD(+). Residues lysine 165 and serine 187 each contribute to the ATP site. 233–234 (HK) contacts deamido-NAD(+).

Belongs to the NAD synthetase family. In terms of assembly, homodimer.

It carries out the reaction deamido-NAD(+) + NH4(+) + ATP = AMP + diphosphate + NAD(+) + H(+). It participates in cofactor biosynthesis; NAD(+) biosynthesis; NAD(+) from deamido-NAD(+) (ammonia route): step 1/1. Catalyzes the ATP-dependent amidation of deamido-NAD to form NAD. Uses ammonia as a nitrogen source. The chain is NH(3)-dependent NAD(+) synthetase from Carboxydothermus hydrogenoformans (strain ATCC BAA-161 / DSM 6008 / Z-2901).